Reading from the N-terminus, the 296-residue chain is MMETNPQTSEGAGKAQSSAKKVKNRRKLRRTVAGAMALTIGLSGAGILATAITPDAQIATAQRDDQALIAEGKDLYDVACITCHGMNLQGVQDRGPSLIGVGEGAVYFQVHSGRMPMQRNEAQASRKTPRYTEAQTLAIAAYVAANGGGPGLVYNEDGTLAMEELRGSNFDGQIDPLDVSRGGDLFRLNCASCHNFTGRGGALSSGKYAPVLDPANEQEIYQAMLTGPQNMPKFSDRQLSADEKKDIIAFIKSTKETPSPGGYSLGGLGPVSEGLFMWGIGIMVLIAAAMWIGSRS.

Residues 1 to 19 (MMETNPQTSEGAGKAQSSA) are compositionally biased toward polar residues. The tract at residues 1–27 (MMETNPQTSEGAGKAQSSAKKVKNRRK) is disordered. A helical membrane pass occupies residues 32–52 (VAGAMALTIGLSGAGILATAI). 2 consecutive Cytochrome c domains span residues 67–147 (ALIA…AANG) and 177–255 (LDVS…KSTK). Positions 80, 83, 84, 190, 193, and 194 each coordinate heme c. Residues 274–294 (GLFMWGIGIMVLIAAAMWIGS) form a helical membrane-spanning segment.

As to quaternary structure, the cytochrome bc1 complex is composed of a cytochrome b (QcrB), the Rieske iron-sulfur protein (QcrA) and a diheme cytochrome c (QcrC) subunit. The bc1 complex forms a supercomplex with cytochrome c oxidase (cytochrome aa3). Post-translationally, binds 2 heme c groups covalently per subunit.

The protein localises to the cell membrane. It catalyses the reaction a quinol + 2 Fe(III)-[cytochrome c](out) = a quinone + 2 Fe(II)-[cytochrome c](out) + 2 H(+)(out). Its function is as follows. Cytochrome c1 subunit of the cytochrome bc1 complex, an essential component of the respiratory electron transport chain required for ATP synthesis. The bc1 complex catalyzes the oxidation of menaquinol and the reduction of cytochrome c in the respiratory chain. The bc1 complex operates through a Q-cycle mechanism that couples electron transfer to generation of the proton gradient that drives ATP synthesis. The protein is Cytochrome bc1 complex cytochrome c subunit (qcrC) of Corynebacterium efficiens (strain DSM 44549 / YS-314 / AJ 12310 / JCM 11189 / NBRC 100395).